A 459-amino-acid polypeptide reads, in one-letter code: Mycothione reductase (459 aa).

Residue 31–39 coordinates FAD; it reads EQGTFGGTC. C39 and C44 are joined by a disulfide. Residue H444 is the Proton acceptor of the active site.

The protein belongs to the class-I pyridine nucleotide-disulfide oxidoreductase family. In terms of assembly, homodimer. Requires FAD as cofactor.

It catalyses the reaction 2 mycothiol + NADP(+) = mycothione + NADPH + H(+). The catalysed reaction is 2 mycothiol + NAD(+) = mycothione + NADH + H(+). Functionally, catalyzes the NAD(P)H-dependent reduction of mycothione (the oxidized disulfide form of mycothiol) to mycothiol. The chain is Mycothione reductase (mtr) from Mycobacterium tuberculosis (strain CDC 1551 / Oshkosh).